Here is a 689-residue protein sequence, read N- to C-terminus: DNA ligase (689 aa).

Residues 40 to 44 (DSEYD), 89 to 90 (SL), and glutamate 121 contribute to the NAD(+) site. The N6-AMP-lysine intermediate role is filled by lysine 123. Positions 144, 179, 295, and 319 each coordinate NAD(+). The Zn(2+) site is built by cysteine 413, cysteine 416, cysteine 431, and cysteine 437. The BRCT domain maps to 610–689 (REQSSLTDKI…EEWLTLIKNV (80 aa)).

Belongs to the NAD-dependent DNA ligase family. LigA subfamily. Mg(2+) serves as cofactor. The cofactor is Mn(2+).

It carries out the reaction NAD(+) + (deoxyribonucleotide)n-3'-hydroxyl + 5'-phospho-(deoxyribonucleotide)m = (deoxyribonucleotide)n+m + AMP + beta-nicotinamide D-nucleotide.. DNA ligase that catalyzes the formation of phosphodiester linkages between 5'-phosphoryl and 3'-hydroxyl groups in double-stranded DNA using NAD as a coenzyme and as the energy source for the reaction. It is essential for DNA replication and repair of damaged DNA. The polypeptide is DNA ligase (Rickettsia africae (strain ESF-5)).